The following is a 207-amino-acid chain: MLNKLSRLLEQAGISLTDHQKNQLVAYVDMLNKWNKAYNLTSVRDPNEMLIRHILDSIVVAPHLRGERFIDVGTGPGLPGIPLSIVRPECHFTLLDSLGKRVRFLRQVQHELKLENIEPVQSRVEAFPSEPPFDGVISRAFASLNDMVSWCKHLPAQDGRFYALKGLVPDDEIAQLPEGYSVESIAKLQVPQLEGERHLVVIKPNHF.

Residues Gly-73, Leu-78, 124–125 (VE), and Arg-139 each bind S-adenosyl-L-methionine.

Belongs to the methyltransferase superfamily. RNA methyltransferase RsmG family.

The protein resides in the cytoplasm. The catalysed reaction is guanosine(527) in 16S rRNA + S-adenosyl-L-methionine = N(7)-methylguanosine(527) in 16S rRNA + S-adenosyl-L-homocysteine. In terms of biological role, specifically methylates the N7 position of guanine in position 527 of 16S rRNA. The polypeptide is Ribosomal RNA small subunit methyltransferase G (Enterobacter sp. (strain 638)).